The chain runs to 388 residues: Chorismate synthase (388 aa).

2 residues coordinate NADP(+): Arg39 and Arg45. Residues 132–134 (RSS), 251–252 (NA), Gly296, 311–315 (KPIPT), and Arg337 contribute to the FMN site.

This sequence belongs to the chorismate synthase family. Homotetramer. The cofactor is FMNH2.

It carries out the reaction 5-O-(1-carboxyvinyl)-3-phosphoshikimate = chorismate + phosphate. Its pathway is metabolic intermediate biosynthesis; chorismate biosynthesis; chorismate from D-erythrose 4-phosphate and phosphoenolpyruvate: step 7/7. In terms of biological role, catalyzes the anti-1,4-elimination of the C-3 phosphate and the C-6 proR hydrogen from 5-enolpyruvylshikimate-3-phosphate (EPSP) to yield chorismate, which is the branch point compound that serves as the starting substrate for the three terminal pathways of aromatic amino acid biosynthesis. This reaction introduces a second double bond into the aromatic ring system. The chain is Chorismate synthase from Staphylococcus aureus (strain bovine RF122 / ET3-1).